Reading from the N-terminus, the 550-residue chain is uncharacterized protein (550 aa).

The signal sequence occupies residues 1 to 13 (MAGALFEPSFAAA). Positions 312–358 (DAQPDPHLSGDEPPSRPLTPETTLFEALTPDPEPDPPATHAPAELIT) are disordered.

This sequence to M.tuberculosis Rv3776.

This is an uncharacterized protein from Mycobacterium tuberculosis (strain CDC 1551 / Oshkosh).